Consider the following 398-residue polypeptide: 1-deoxy-D-xylulose 5-phosphate reductoisomerase (398 aa).

The NADPH site is built by T11, G12, S13, I14, R38, N39, and N125. K126 is a binding site for 1-deoxy-D-xylulose 5-phosphate. E127 lines the NADPH pocket. Position 151 (D151) interacts with Mn(2+). Residues S152, E153, S179, and H202 each coordinate 1-deoxy-D-xylulose 5-phosphate. E153 is a Mn(2+) binding site. An NADPH-binding site is contributed by G208. S215, N220, K221, and E224 together coordinate 1-deoxy-D-xylulose 5-phosphate. E224 is a Mn(2+) binding site.

Belongs to the DXR family. Mg(2+) serves as cofactor. The cofactor is Mn(2+).

The catalysed reaction is 2-C-methyl-D-erythritol 4-phosphate + NADP(+) = 1-deoxy-D-xylulose 5-phosphate + NADPH + H(+). Its pathway is isoprenoid biosynthesis; isopentenyl diphosphate biosynthesis via DXP pathway; isopentenyl diphosphate from 1-deoxy-D-xylulose 5-phosphate: step 1/6. Functionally, catalyzes the NADPH-dependent rearrangement and reduction of 1-deoxy-D-xylulose-5-phosphate (DXP) to 2-C-methyl-D-erythritol 4-phosphate (MEP). The sequence is that of 1-deoxy-D-xylulose 5-phosphate reductoisomerase from Burkholderia mallei (strain NCTC 10247).